A 526-amino-acid chain; its full sequence is Cytochrome P450 monooxygenase ucsK (526 aa).

The chain crosses the membrane as a helical span at residues 7-27 (PVLAAATAVSFGFYLAGLFVY). The N-linked (GlcNAc...) asparagine glycan is linked to asparagine 403. Cysteine 467 provides a ligand contact to heme.

It belongs to the cytochrome P450 family. Heme is required as a cofactor.

It is found in the membrane. It participates in mycotoxin biosynthesis. In terms of biological role, cytochrome P450 monooxygenase; part of the gene cluster that mediates the biosynthesis of UCS1025A, a member of the pyrrolizidinone family that acts as a strong telomerase inhibitor and displays potent antibacterial and antitumor properties. These compounds share a hemiaminal-containing pyrrolizidinone core fused with a gamma-lactone, giving a furopyrrolizidine that is connected to a decalin fragment. The polyketide synthase module (PKS) of the PKS-NRPS ucsA is responsible for the synthesis of the polyketide backbone via the condensation of an acetyl-CoA starter unit with 6 malonyl-CoA units. The downstream nonribosomal peptide synthetase (NRPS) module then amidates the carboxyl end of the polyketide with a 2S,3S-methylproline derived from L-isoleucine by the 2-oxoglutarate-dependent dioxygenase ucsF which converts L-isoleucine to (4S,5S)-4-methylpyrroline-5-carboxylate that is further converted to 2S,3S-methylproline by the pyrroline-5-carboxylate reductase ucsG. Reductive release of the completed aminoacyl polyketide from the assembly line can form the 3-pyrrolin-2-one structure via an intramolecular Knoevenagel reaction. Because ucsA lacks a designated enoylreductase (ER) domain, the required activity is provided the enoyl reductase ucsL. This keto acyclic precursor is the substrate of the Diels-Alderase ucsH, that catalyzes the Diels-Alder cycloaddition. Oxidation of the 3S-methyl group to a carboxylate by the cytochrome P450 monooxygenase ucsK allows an oxa-Michael cyclization that might involve the reductase/dehydrogenase ucsI and which furnishes the furopyrrolizidine. The oxidase ucsJ likely plays a critical role in stereoselective reduction of the C5-C6 double bond to afford the required R-configured carboxylate group. Further enolization and oxidation at C5 by an unidentified enzyme affords the last intermediate that can undergo oxa-Michael cyclization to yield UCS1025A. This is Cytochrome P450 monooxygenase ucsK from Acremonium sp.